A 402-amino-acid polypeptide reads, in one-letter code: Phytoene synthase 2, chloroplastic (402 aa).

A chloroplast-targeting transit peptide spans 1–54 (MAAGSSAVWAAQHPACSGGKFHHLSPSHSHCRPRRALQTPPALPARRSGASPPR). Over residues 20–35 (KFHHLSPSHSHCRPRR) the composition is skewed to basic residues. The disordered stretch occupies residues 20 to 54 (KFHHLSPSHSHCRPRRALQTPPALPARRSGASPPR). A compositionally biased stretch (low complexity) spans 44–54 (PARRSGASPPR).

This sequence belongs to the phytoene/squalene synthase family. Expressed in leaves and endosperm.

It is found in the plastid. The protein resides in the chloroplast. The protein localises to the plastoglobule. The catalysed reaction is 2 (2E,6E,10E)-geranylgeranyl diphosphate = 15-cis-phytoene + 2 diphosphate. Catalyzes the conversion of geranylgeranyl diphosphate to phytoene. Mediates the first committed step in carotenoid biosynthesis. The chain is Phytoene synthase 2, chloroplastic from Zea mays (Maize).